The sequence spans 1097 residues: UPF0746 protein DDB_G0281095 (1097 aa).

Basic and acidic residues predominate over residues 1 to 11 (MVNNNKRKEIE). The tract at residues 1–24 (MVNNNKRKEIENQENDNDDDNDGL) is disordered. A compositionally biased stretch (acidic residues) spans 12–22 (NQENDNDDDND). Positions 35–69 (YDSIRSKELQTIAKSLGLPNNGKKQEVYKRIEGYF) constitute an SAP domain. A coiled-coil region spans residues 329 to 521 (FKEIREIHQQ…QLILELNEIQ (193 aa)).

Belongs to the UPF0746 family.

This Dictyostelium discoideum (Social amoeba) protein is UPF0746 protein DDB_G0281095.